The sequence spans 310 residues: Protein RL1 (310 aa).

Residues 1–12 are compositionally biased toward polar residues; sequence MPATDTNSTHTT. The tract at residues 1–44 is disordered; that stretch reads MPATDTNSTHTTPLHPEDQHTLPLHHSTTQPHVQTSDKHADKQH. The segment covering 35–44 has biased composition (basic and acidic residues); it reads TSDKHADKQH. The involved in the interaction with host DDB1 stretch occupies residues 153-159; that stretch reads LLLARQR. A disordered region spans residues 205 to 252; sequence ERPSAGEAQARGLLPRIRITPISTSPRPKPPQPTTSTASHPHATARPD. Over residues 238–248 the composition is skewed to low complexity; the sequence is TTSTASHPHAT.

It belongs to the HHV-5 HKLF1 family. Interacts with host adaptor protein DDB1; this interaction allows RL1 to recruit the cullin4-RING E3 ubiquitin ligase (CRL4) complex and promote SLN11 degradation.

Its function is as follows. Degrades the host antiviral factor SLFN11 via the cullin4-RING E3 ubiquitin ligase (CRL4) complex. This chain is Protein RL1 (RL1), found in Human cytomegalovirus (strain Merlin) (HHV-5).